A 225-amino-acid polypeptide reads, in one-letter code: Sugar fermentation stimulation protein homolog (225 aa).

The protein belongs to the SfsA family.

This chain is Sugar fermentation stimulation protein homolog, found in Sulfurisphaera tokodaii (strain DSM 16993 / JCM 10545 / NBRC 100140 / 7) (Sulfolobus tokodaii).